Here is a 235-residue protein sequence, read N- to C-terminus: Phosphoribosylaminoimidazole-succinocarboxamide synthase (235 aa).

This sequence belongs to the SAICAR synthetase family.

It carries out the reaction 5-amino-1-(5-phospho-D-ribosyl)imidazole-4-carboxylate + L-aspartate + ATP = (2S)-2-[5-amino-1-(5-phospho-beta-D-ribosyl)imidazole-4-carboxamido]succinate + ADP + phosphate + 2 H(+). It participates in purine metabolism; IMP biosynthesis via de novo pathway; 5-amino-1-(5-phospho-D-ribosyl)imidazole-4-carboxamide from 5-amino-1-(5-phospho-D-ribosyl)imidazole-4-carboxylate: step 1/2. This is Phosphoribosylaminoimidazole-succinocarboxamide synthase (purC) from Streptococcus pneumoniae serotype 4 (strain ATCC BAA-334 / TIGR4).